Reading from the N-terminus, the 135-residue chain is Small ribosomal subunit protein uS8 (135 aa).

The protein belongs to the universal ribosomal protein uS8 family. In terms of assembly, part of the 30S ribosomal subunit. Contacts proteins S5 and S12.

Its function is as follows. One of the primary rRNA binding proteins, it binds directly to 16S rRNA central domain where it helps coordinate assembly of the platform of the 30S subunit. The polypeptide is Small ribosomal subunit protein uS8 (Parafrankia sp. (strain EAN1pec)).